A 397-amino-acid polypeptide reads, in one-letter code: Elongation factor Tu (397 aa).

Positions 10–206 (KPHVNIGTIG…AVDSYIPTPE (197 aa)) constitute a tr-type G domain. The G1 stretch occupies residues 19 to 26 (GHVDHGKT). 19–26 (GHVDHGKT) contacts GTP. Mg(2+) is bound at residue threonine 26. The tract at residues 60 to 64 (GITIN) is G2. The tract at residues 81 to 84 (DCPG) is G3. GTP is bound by residues 81 to 85 (DCPGH) and 136 to 139 (NKAD). Residues 136–139 (NKAD) form a G4 region. The interval 174–176 (SAL) is G5.

It belongs to the TRAFAC class translation factor GTPase superfamily. Classic translation factor GTPase family. EF-Tu/EF-1A subfamily. As to quaternary structure, monomer.

It localises to the cytoplasm. It carries out the reaction GTP + H2O = GDP + phosphate + H(+). Functionally, GTP hydrolase that promotes the GTP-dependent binding of aminoacyl-tRNA to the A-site of ribosomes during protein biosynthesis. This is Elongation factor Tu from Clostridium beijerinckii (strain ATCC 51743 / NCIMB 8052) (Clostridium acetobutylicum).